The primary structure comprises 151 residues: uncharacterized protein (151 aa).

This sequence to B.subtilis pcf and to sigma factors.

This is an uncharacterized protein from Bacillus subtilis (strain 168).